A 122-amino-acid chain; its full sequence is Small ribosomal subunit protein uS13 (122 aa).

Positions P97–K122 are disordered.

It belongs to the universal ribosomal protein uS13 family. As to quaternary structure, part of the 30S ribosomal subunit. Forms a loose heterodimer with protein S19. Forms two bridges to the 50S subunit in the 70S ribosome.

In terms of biological role, located at the top of the head of the 30S subunit, it contacts several helices of the 16S rRNA. In the 70S ribosome it contacts the 23S rRNA (bridge B1a) and protein L5 of the 50S subunit (bridge B1b), connecting the 2 subunits; these bridges are implicated in subunit movement. Contacts the tRNAs in the A and P-sites. This Bartonella tribocorum (strain CIP 105476 / IBS 506) protein is Small ribosomal subunit protein uS13.